We begin with the raw amino-acid sequence, 386 residues long: Ribonucleoside-diphosphate reductase subunit M2 (386 aa).

Serine 20 carries the post-translational modification Phosphoserine. The residue at position 33 (threonine 33) is a Phosphothreonine. A Cy motif is present at residues 49–51; sequence RRI. Fe cation-binding residues include aspartate 139, glutamate 170, and histidine 173. Tyrosine 177 is an active-site residue. Residues glutamate 233, glutamate 267, and histidine 270 each coordinate Fe cation.

This sequence belongs to the ribonucleoside diphosphate reductase small chain family. As to quaternary structure, heterodimer of a large and a small subunit. Interacts (via Cy motif and when phosphorylated at Thr-33) with CCNF; the interaction occurs exclusively in G2 and early M. It depends on Fe cation as a cofactor. Post-translationally, phosphorylation on Ser-20 relieves the inhibitory effect on Wnt signaling. Phosphorylated on Thr-33 by CDK1 and CDK2; predominantly in G2 and M phase. Ubiquitinated by the SCF(CCNF) E3 ubiquitin-protein ligase complex; leading to its degradation by the proteasome.

Its subcellular location is the cytoplasm. The protein resides in the nucleus. The catalysed reaction is a 2'-deoxyribonucleoside 5'-diphosphate + [thioredoxin]-disulfide + H2O = a ribonucleoside 5'-diphosphate + [thioredoxin]-dithiol. Its function is as follows. Provides the precursors necessary for DNA synthesis. Catalyzes the biosynthesis of deoxyribonucleotides from the corresponding ribonucleotides. Inhibits Wnt signaling. The protein is Ribonucleoside-diphosphate reductase subunit M2 (RRM2) of Mesocricetus auratus (Golden hamster).